We begin with the raw amino-acid sequence, 591 residues long: Aspartate--tRNA(Asp/Asn) ligase (591 aa).

Position 176 (Glu176) interacts with L-aspartate. The aspartate stretch occupies residues 200–203 (QLFK). L-aspartate is bound at residue Arg222. ATP contacts are provided by residues 222 to 224 (RDE) and Gln231. His450 contacts L-aspartate. Position 484 (Glu484) interacts with ATP. Arg491 contributes to the L-aspartate binding site. 536–539 (GLDR) provides a ligand contact to ATP.

The protein belongs to the class-II aminoacyl-tRNA synthetase family. Type 1 subfamily. In terms of assembly, homodimer.

It localises to the cytoplasm. It catalyses the reaction tRNA(Asx) + L-aspartate + ATP = L-aspartyl-tRNA(Asx) + AMP + diphosphate. Aspartyl-tRNA synthetase with relaxed tRNA specificity since it is able to aspartylate not only its cognate tRNA(Asp) but also tRNA(Asn). Reaction proceeds in two steps: L-aspartate is first activated by ATP to form Asp-AMP and then transferred to the acceptor end of tRNA(Asp/Asn). The polypeptide is Aspartate--tRNA(Asp/Asn) ligase (Bacillus cereus (strain ATCC 10987 / NRS 248)).